Consider the following 102-residue polypeptide: Iron-sulfur cluster assembly protein CyaY (102 aa).

Belongs to the frataxin family.

In terms of biological role, involved in iron-sulfur (Fe-S) cluster assembly. May act as a regulator of Fe-S biogenesis. The chain is Iron-sulfur cluster assembly protein CyaY from Mannheimia succiniciproducens (strain KCTC 0769BP / MBEL55E).